Here is a 649-residue protein sequence, read N- to C-terminus: Phospholipase A1 PLIP1, chloroplastic (649 aa).

The N-terminal 67 residues, 1–67, are a transit peptide targeting the chloroplast; it reads MAFNTAMAST…NNRILAVSVR (67 aa). Residues 420-424 carry the GXSXG motif; it reads GHSLG. Ser-422 serves as the catalytic Acyl-ester intermediate. Active-site charge relay system residues include Asp-483 and His-593.

Belongs to the AB hydrolase superfamily. Lipase family.

It localises to the plastid. It is found in the chloroplast thylakoid membrane. It carries out the reaction a 1,2-diacyl-sn-glycero-3-phosphocholine + H2O = a 2-acyl-sn-glycero-3-phosphocholine + a fatty acid + H(+). It catalyses the reaction a 1,2-diacyl-3-O-(beta-D-galactosyl)-sn-glycerol + 2 H2O = 3-beta-D-galactosyl-sn-glycerol + 2 a fatty acid + 2 H(+). Sn-1-specific phospholipase A1 involved in seed oil biosynthesis. Hydrolyzes polyunsaturated acyl groups from a unique chloroplast-specific phosphatidylglycerol (PG) that contains 16:1 delta 3-trans as its second acyl group. The polyunsaturated acyl groups released by PLIP1 are exported from the chloroplast, reincorporated into phosphatidylcholine (PC), and ultimately enter seed triacylglycerol (TAG). In vitro, possesses broad substrate specificity. Can hydrolyze the galactolipid monogalactosyldiacylglycerol (MGDG), and the phoshpolipids phosphatidylcholine (PC), phosphatidylethanolamine (PE), phosphatidic acid (PA), phosphatidylserine (PS) phosphatidylglycerol (PG) and phosphatidylinositol (PI). The sequence is that of Phospholipase A1 PLIP1, chloroplastic from Arabidopsis thaliana (Mouse-ear cress).